The primary structure comprises 401 residues: Methyltransferase cfoC (401 aa).

An S-adenosyl-L-methionine-binding site is contributed by aspartate 268. Histidine 308 (proton acceptor) is an active-site residue.

It belongs to the class I-like SAM-binding methyltransferase superfamily. Cation-independent O-methyltransferase family.

It functions in the pathway secondary metabolite biosynthesis; flavonoid biosynthesis. Methyltransferase; part of the gene cluster that mediates the biosynthesis of chlorflavonin, a fungal flavonoid with acetolactate synthase inhibitory activity. Within the pathway, cfoC is responsible for the methylation at position C8-OH of flavonoid. The pathway begins with the PKS-NRPS hybrid synthetase cfoA that uses benzoic acid or p-hydroxybenzoic acid as a starter unit with four rounds of chain elongation using malonyl-CoA to form the chalcone skeleton. Then, a new type of chalcone isomerase, cfoK, catalyzes the conversion of the chalcone into a flavanone by a histidine-mediated oxa-Michael addition mechanism. The desaturation of flavanone to flavone is catalyzed by a new type of flavone synthase, the flavin mononucleotide (FMN)-dependent oxidoreductase cfoJ. Monooxygenases cfoF, cfoG, and P450 cfoH are responsible for the hydroxylation of the flavonoid skeleton at sites C3, C8, and C2', respectively. Like cfoF, the dehydratase cfoI also plays a role in the hydroxylation of position C3. Methyltransferases cfoB, cfoC, and cfoD then catalyze the methylation of C7-OH, C8-OH, and C3-OH, respectively. Finally, the monooxygenase cfoE is responsible for the chlorination of flavonoid at position C3'. This chain is Methyltransferase cfoC, found in Aspergillus candidus.